A 492-amino-acid polypeptide reads, in one-letter code: MASAEVFKANVEAVTRDYICEPRIEYRTVGGVSGPLVVVELVKRPKFAEIVNIRLGNGTSRRGQVLEVDGNRAVVQVFEGTSGIDNRNTTLQFTGEVLSTPVSKDMLGRVFNGSGKPIDGGPTVLAEAYLDIQGSSINPSERTYPEEMSQTGVSTIDVMNSIARGQKIPLFSAAGLPHNDIAAQICRQAGLVRQKAQDSMIDAGREEEEFAIVFAAMGVNMETAHYFKQDFEENGSMEKTVLFLNLANDPTIERIITPRIALTTAEYLAYECGKHVLVILTDMSSYADALREVSAAREEVPGRRGYPGYMYTDLATIYERAGRIEGRKGSITQLPILTMPNDDITHPIPDLTGYITEGQIYVDRQLHNIQIYPPINVLPTLSRLMKSAIGEGMTRKDHSEVSNQLYDNYAIGKDVAAMKAVVGEEALSSEDLLYLEFLDKFERKFVNQGHYEARTIFDSLDLAWTLLRLFPKELLRRITAKTLEKMYERSES.

This sequence belongs to the ATPase alpha/beta chains family. In terms of assembly, V-ATPase is a heteromultimeric enzyme composed of a peripheral catalytic V1 complex (main components: subunits A, B, C, D, E, and F) attached to an integral membrane V0 proton pore complex (main component: the proteolipid protein).

In terms of biological role, non-catalytic subunit of the peripheral V1 complex of vacuolar ATPase. V-ATPase is responsible for acidifying a variety of intracellular compartments in eukaryotic cells. The chain is V-type proton ATPase subunit B 2 from Acetabularia acetabulum (Mermaid's wine glass).